Reading from the N-terminus, the 156-residue chain is MSVVLDTPVAVRRTAMDLLARREHGRVELTRKLRQRGATDELIELALDRLAEEGLLSEARYLESFIRYRSNAGYGPARIREELGQRGLNRGDVDQALRDCGVNWAERLQDAWQRKYAGQRPHDPRSRAQQTRFLAYRGFPMDMIGRLLSGRDLDDY.

This sequence belongs to the RecX family.

It localises to the cytoplasm. Modulates RecA activity. The chain is Regulatory protein RecX from Pseudomonas putida (strain W619).